The primary structure comprises 786 residues: MDKERYSRSHRDDRDRDSSPDHSPQREGGRRRDRDVDSKRRDSDHYRSSRRGDREDERDRTKDRRGRSVERGEREGSRDREKHHHERSHEGSKEKESRSKRKDREEENGARDGKKKSRFADGNGERRSRFEDVAIEVENKDAQVSEGSGATNPTSGVTMGASTYSSIPSEASAAPSQTLLTKVSSISTTDENKASVVRSHEVPGKSSTDGRPLSTAGKSSANLPLDSSALAAKARKALQLQKGLADRLKNLPLLKKATKPTSEGSPHTRVPPSTTTPAVSTGTSFASTLPHTGLAGFGSIANIEAVKRAQELAANMGFHQDREFAPVINLFPGQAPSDMTVAQRPEKPPVLRVDALGREIDEHGNVISVTKPSNLSTLKVNINKKKKDAFQILKPQLEADLKENPYFDTRMGIDEKKILRPKRMSFQFVEEGKWTRDAENLKFKSHFGEAKAKELKVKQAQLAKANDDINPNLIEVSERVPRKEKPKEPIPDVEWWDANVLTNGEYGEITDGTITESHLKIEKLTHYIEHPRPIEPPAEAAPPPPQPLKLTKKEQKKLRTQRRLAKEKEKQEMIRQGLLEPPKAKVKMSNLMKVLGSEATQDPTKLEKEIRTAAAEREQAHTDRNAARKLTPAEKREKKERKLFDDPTTVETIVSVYKIKKLSHPKTRFKVEMNARENRLTGCSVMTDEMSVVVVEGKSKAIKRYGKLMMKRINWEEAERKEGNEDEEEEVNGGNKCWLVWQGSIGKPSFHRFHVHECVTESTAKKVFMDAGVVHYWDLAVNYSDD.

Composition is skewed to basic and acidic residues over residues 1–80 (MDKE…SRDR), 87–112 (RSHE…GARD), and 123–143 (NGER…KDAQ). Disordered regions lie at residues 1 to 223 (MDKE…SANL), 255 to 283 (KKAT…STGT), 532 to 557 (RPIE…EQKK), and 616 to 642 (EREQ…KERK). The segment covering 145–164 (SEGSGATNPTSGVTMGASTY) has biased composition (polar residues). Residues 165 to 176 (SSIPSEASAAPS) show a composition bias toward low complexity. The span at 177–189 (QTLLTKVSSISTT) shows a compositional bias: polar residues. Basic and acidic residues predominate over residues 190–203 (DENKASVVRSHEVP). Positions 268–283 (TRVPPSTTTPAVSTGT) are enriched in low complexity. Over residues 534-547 (IEPPAEAAPPPPQP) the composition is skewed to pro residues.

The protein resides in the nucleus. It is found in the nucleoplasm. In terms of biological role, functions in the RNA-directed DNA methylation (RdDM) pathway. Acts as a pre-mRNA splicing factor, likely by affecting Pol V transcripts. Affects DNA methylation of transposable elements (TEs) and preferentially influences NRPD1- and ROS1-targeted loci. This chain is Protein RDM16, found in Arabidopsis thaliana (Mouse-ear cress).